Here is a 703-residue protein sequence, read N- to C-terminus: Polyribonucleotide nucleotidyltransferase (703 aa).

Mg(2+) contacts are provided by Asp-486 and Asp-492. Positions 553–612 (PKIEIIHINPDKIRDVIGPGGKKINEIIDATGVKLDIEQDGTVFIGSSDASMIEAAKKLI) constitute a KH domain. Positions 622–690 (GQIYMATVKR…KQGRVNASRK (69 aa)) constitute an S1 motif domain.

The protein belongs to the polyribonucleotide nucleotidyltransferase family. It depends on Mg(2+) as a cofactor.

Its subcellular location is the cytoplasm. It catalyses the reaction RNA(n+1) + phosphate = RNA(n) + a ribonucleoside 5'-diphosphate. Its function is as follows. Involved in mRNA degradation. Catalyzes the phosphorolysis of single-stranded polyribonucleotides processively in the 3'- to 5'-direction. In Macrococcus caseolyticus (strain JCSC5402) (Macrococcoides caseolyticum), this protein is Polyribonucleotide nucleotidyltransferase.